We begin with the raw amino-acid sequence, 1486 residues long: Chromosome partition protein MukB (1486 aa).

34–41 is an ATP binding site; the sequence is GGNGAGKS. Coiled-coil stretches lie at residues 326 to 418, 444 to 480, and 509 to 603; these read LEAD…QYNQ, LETF…QAYQ, and RHLA…RAPV. The tract at residues 666–783 is flexible hinge; it reads PGGSEDQRLN…EVPLFGRAAR (118 aa). Coiled-coil stretches lie at residues 835–923, 977–1115, and 1209–1266; these read EAEI…AKLE, EMLS…TAKA, and VEAI…QNVS.

It belongs to the SMC family. MukB subfamily. As to quaternary structure, homodimerization via its hinge domain. Binds to DNA via its C-terminal region. Interacts, and probably forms a ternary complex, with MukE and MukF via its C-terminal region. The complex formation is stimulated by calcium or magnesium. Interacts with tubulin-related protein FtsZ.

It localises to the cytoplasm. The protein resides in the nucleoid. Its function is as follows. Plays a central role in chromosome condensation, segregation and cell cycle progression. Functions as a homodimer, which is essential for chromosome partition. Involved in negative DNA supercoiling in vivo, and by this means organize and compact chromosomes. May achieve or facilitate chromosome segregation by condensation DNA from both sides of a centrally located replisome during cell division. This chain is Chromosome partition protein MukB, found in Escherichia coli (strain SMS-3-5 / SECEC).